A 253-amino-acid polypeptide reads, in one-letter code: 2-dehydro-3-deoxy-D-gluconate 5-dehydrogenase (253 aa).

14–38 contacts NAD(+); it reads VVTGCDTGLGQGMALGLAQAGCDIV. S145 lines the substrate pocket. The active-site Proton acceptor is Y158.

It belongs to the short-chain dehydrogenases/reductases (SDR) family. Homotetramer.

It carries out the reaction 2-dehydro-3-deoxy-D-gluconate + NAD(+) = 3-deoxy-D-glycero-2,5-hexodiulosonate + NADH + H(+). The catalysed reaction is 4-pregnen-20,21-diol-3-one + NAD(+) = 21-hydroxyprogesterone + NADH + H(+). In terms of biological role, catalyzes the reversible reduction of 2,5-diketo-3-deoxygluconate (DKII or 4,6-dihydroxy-2,5-dioxohexanoate) into 2-keto-3-deoxygluconate (KDG or 2-dehydro-3-deoxygluconate) with a concomitant oxidation of NADH. To a lesser extent, can also reduce 5-keto-D-gluconate and oxidize D-gluconate and 1,2-propanediol. Together with KduI, seems to play a role in the catabolism of hexuronates under osmotic stress conditions, substituting for the regular hexuronate degrading enzymes UxaABC and UxuAB whose expression is repressed in these conditions. In vitro, also exhibits NADH-dependent 20-ketosteroid reductase activity against eukaryotic steroid hormone 11-deoxycorticosterone (11-DOC), which is converted into the product 4-pregnen-20,21-diol-3-one. In addition to 11-DOC, five other C21 steroid compounds (11-deoxycortisol, cortisol, corticosterone, cortisone, and 21-hydroxypregnenolone) are reduced by KduD, but steroids lacking the hydroxyl group at C21 position, such as pregnenolone, testosterone propionate, cortisone acetate, or progesterone, cannot be used as substrate. This Escherichia coli (strain K12) protein is 2-dehydro-3-deoxy-D-gluconate 5-dehydrogenase.